We begin with the raw amino-acid sequence, 545 residues long: DNA mismatch repair protein MutL (545 aa).

Residues 517 to 545 (RRSGARGGGEARPRPQEESFPEAPLPREP) form a disordered region.

This sequence belongs to the DNA mismatch repair MutL/HexB family.

In terms of biological role, this protein is involved in the repair of mismatches in DNA. It is required for dam-dependent methyl-directed DNA mismatch repair. May act as a 'molecular matchmaker', a protein that promotes the formation of a stable complex between two or more DNA-binding proteins in an ATP-dependent manner without itself being part of a final effector complex. The polypeptide is DNA mismatch repair protein MutL (Thermus thermophilus (strain ATCC 27634 / DSM 579 / HB8)).